A 341-amino-acid chain; its full sequence is Ribosomal RNA small subunit methyltransferase H (341 aa).

Residues 47-49 (GGY), Asp-64, Phe-91, Asp-109, and Gln-116 contribute to the S-adenosyl-L-methionine site. A disordered region spans residues 292–318 (VAASEDEASRNPRARSAKLRAGVRTPA).

It belongs to the methyltransferase superfamily. RsmH family.

It localises to the cytoplasm. It catalyses the reaction cytidine(1402) in 16S rRNA + S-adenosyl-L-methionine = N(4)-methylcytidine(1402) in 16S rRNA + S-adenosyl-L-homocysteine + H(+). Its function is as follows. Specifically methylates the N4 position of cytidine in position 1402 (C1402) of 16S rRNA. The protein is Ribosomal RNA small subunit methyltransferase H of Sinorhizobium fredii (strain NBRC 101917 / NGR234).